A 128-amino-acid chain; its full sequence is Large ribosomal subunit protein bL17 (128 aa).

This sequence belongs to the bacterial ribosomal protein bL17 family. As to quaternary structure, part of the 50S ribosomal subunit. Contacts protein L32.

The polypeptide is Large ribosomal subunit protein bL17 (Histophilus somni (strain 129Pt) (Haemophilus somnus)).